The primary structure comprises 208 residues: ATP-dependent Clp protease proteolytic subunit (208 aa).

Catalysis depends on S98, which acts as the Nucleophile. H123 is an active-site residue.

The protein belongs to the peptidase S14 family. Fourteen ClpP subunits assemble into 2 heptameric rings which stack back to back to give a disk-like structure with a central cavity, resembling the structure of eukaryotic proteasomes.

The protein localises to the cytoplasm. It carries out the reaction Hydrolysis of proteins to small peptides in the presence of ATP and magnesium. alpha-casein is the usual test substrate. In the absence of ATP, only oligopeptides shorter than five residues are hydrolyzed (such as succinyl-Leu-Tyr-|-NHMec, and Leu-Tyr-Leu-|-Tyr-Trp, in which cleavage of the -Tyr-|-Leu- and -Tyr-|-Trp bonds also occurs).. Functionally, cleaves peptides in various proteins in a process that requires ATP hydrolysis. Has a chymotrypsin-like activity. Plays a major role in the degradation of misfolded proteins. This chain is ATP-dependent Clp protease proteolytic subunit, found in Wolbachia sp. subsp. Drosophila simulans (strain wRi).